The sequence spans 101 residues: uncharacterized protein (101 aa).

This is an uncharacterized protein from Escherichia coli (strain K12).